Here is a 415-residue protein sequence, read N- to C-terminus: Mannosylglycerate hydrolase (415 aa).

Substrate-binding positions include Tyr-23, 27-30 (WLWD), Tyr-76, Gln-98, and Gly-158. Asp-160 functions as the Proton donor in the catalytic mechanism. Substrate is bound by residues Arg-193 and 344–345 (YW). Glu-388 functions as the Proton acceptor in the catalytic mechanism.

This sequence belongs to the glycosyl hydrolase 63 family. In terms of assembly, homotetramer in solution.

The enzyme catalyses (2R)-2-O-(alpha-D-mannosyl)-glycerate + H2O = D-mannose + (R)-glycerate. It carries out the reaction (2R)-2-O-(alpha-D-glucopyranosyl)-glycerate + H2O = (R)-glycerate + D-glucose. With respect to regulation, activity is not stimulated by divalent cations and not affected in the presence of EDTA. In terms of biological role, hydrolase that catalyzes the hydrolysis of mannosylglycerate (MG), a solute produced in response to osmotic stress in thermophiles, into mannose and glycerate. Can also hydrolyze glucosylglycerate (GG) to glucose and glycerate, with similar catalytic efficiency. Is highly specific for MG and GG, and cannot use mannosylglyceramide (MGA), glucosylglycerol, mannosylglucosylglycerate (MGG), glucosylglucosylglycerate (GGG) or trehalose as substrates. The sequence is that of Mannosylglycerate hydrolase from Thermus thermophilus (strain ATCC BAA-163 / DSM 7039 / HB27).